Here is a 414-residue protein sequence, read N- to C-terminus: MKIYLVGGAVRDSLLGLPVTEKDWVVVGATPEHLLAQGYQQVGKDFPVFLHPISRDEYALARTERKSGKGYTGFVCHAEPDVTLEQDLLRRDLTINAIARTERGDLIDPYHGRRDLDNRVLRHVSDAFSEDPLRVLRVARFAARFAHLGFQIAEETMALMQKMAHEGELAFLTPERVWKETEKALGTSSPDVYFQVLRDCGALAVLFPEIDNLYGVPAPAKWHPEIDTGIHTMMTVAMAARLSPDIDVRFATLCHDLGKGLTPPELWPRHLGHGPAGVKLVEALCQRLRVPNPIRDLAKLVAEYHDLVHTVQVLQPKTLLKLFDAIDVWRKPQRLEQLALTSEADARGRTSFEENPYPQGNYLREAFRVASQVSSASVVADGFKGIDVRNELARRRIHALADWKAQQPDVSSTS.

2 residues coordinate ATP: Gly8 and Arg11. CTP contacts are provided by Gly8 and Arg11. Mg(2+) contacts are provided by Glu21 and Asp23. Residues Arg91, Arg137, and Arg140 each contribute to the ATP site. The CTP site is built by Arg91, Arg137, and Arg140. In terms of domain architecture, HD spans 228–329; the sequence is TGIHTMMTVA…LKLFDAIDVW (102 aa).

This sequence belongs to the tRNA nucleotidyltransferase/poly(A) polymerase family. Bacterial CCA-adding enzyme type 1 subfamily. In terms of assembly, monomer. Can also form homodimers and oligomers. Mg(2+) is required as a cofactor. Requires Ni(2+) as cofactor.

It catalyses the reaction a tRNA precursor + 2 CTP + ATP = a tRNA with a 3' CCA end + 3 diphosphate. The enzyme catalyses a tRNA with a 3' CCA end + 2 CTP + ATP = a tRNA with a 3' CCACCA end + 3 diphosphate. Catalyzes the addition and repair of the essential 3'-terminal CCA sequence in tRNAs without using a nucleic acid template. Adds these three nucleotides in the order of C, C, and A to the tRNA nucleotide-73, using CTP and ATP as substrates and producing inorganic pyrophosphate. tRNA 3'-terminal CCA addition is required both for tRNA processing and repair. Also involved in tRNA surveillance by mediating tandem CCA addition to generate a CCACCA at the 3' terminus of unstable tRNAs. While stable tRNAs receive only 3'-terminal CCA, unstable tRNAs are marked with CCACCA and rapidly degraded. This Pectobacterium atrosepticum (strain SCRI 1043 / ATCC BAA-672) (Erwinia carotovora subsp. atroseptica) protein is Multifunctional CCA protein.